The chain runs to 235 residues: Glucosamine-6-phosphate deaminase (235 aa).

The Proton acceptor; for enolization step role is filled by D62. Residue N128 is the For ring-opening step of the active site. The active-site Proton acceptor; for ring-opening step is H130. The active-site For ring-opening step is the E135.

This sequence belongs to the glucosamine/galactosamine-6-phosphate isomerase family. NagB subfamily.

It carries out the reaction alpha-D-glucosamine 6-phosphate + H2O = beta-D-fructose 6-phosphate + NH4(+). It participates in amino-sugar metabolism; N-acetylneuraminate degradation; D-fructose 6-phosphate from N-acetylneuraminate: step 5/5. Functionally, catalyzes the reversible isomerization-deamination of glucosamine 6-phosphate (GlcN6P) to form fructose 6-phosphate (Fru6P) and ammonium ion. This is Glucosamine-6-phosphate deaminase from Lactococcus lactis subsp. lactis (strain IL1403) (Streptococcus lactis).